Reading from the N-terminus, the 379-residue chain is MEKPLRIGIIAGELSGDTLGEGFIKAVKERYPNAEFVGIGGPKMIAQGCESLFDMEELAVMGLVEVLGRLPRLLKVKAELVKYFTQNPPDVFVGIDAPDFNLRLELDLKQAGIKTVHYVSPSVWAWRQKRIFKIEAATNLVLAFLPFEKAFYDKFNVPCEFIGHTLADAIPLQSEQAPARDLLGLEQDKKWLAVLPGSRGSELKMLSQPFIETCKLLHQKYPGLGFVVALVNQKRREQFEQAWKEHAPELDFKLVDDTARNVITASDAVMLASGTVALECMLLKRPMVVGYRVNTFTAFLAKRLLKTKYVSLPNILADDELVKEYLQDDCTPDNLFNEVSRLLESDNKPMLDKFTEMHHWIRKDADQQAANAVLKLIEK.

This sequence belongs to the LpxB family.

The catalysed reaction is a lipid X + a UDP-2-N,3-O-bis[(3R)-3-hydroxyacyl]-alpha-D-glucosamine = a lipid A disaccharide + UDP + H(+). Its pathway is bacterial outer membrane biogenesis; LPS lipid A biosynthesis. In terms of biological role, condensation of UDP-2,3-diacylglucosamine and 2,3-diacylglucosamine-1-phosphate to form lipid A disaccharide, a precursor of lipid A, a phosphorylated glycolipid that anchors the lipopolysaccharide to the outer membrane of the cell. The chain is Lipid-A-disaccharide synthase from Vibrio parahaemolyticus serotype O3:K6 (strain RIMD 2210633).